A 145-amino-acid polypeptide reads, in one-letter code: Superoxide dismutase [Mn/Fe] (145 aa).

Positions 10 and 64 each coordinate Fe(3+). Residues H10 and H64 each contribute to the Mn(2+) site. The disordered stretch occupies residues 126–145 (TSTANQDTPISEGKKPILGL).

Belongs to the iron/manganese superoxide dismutase family. Mn(2+) serves as cofactor. The cofactor is Fe(3+).

It catalyses the reaction 2 superoxide + 2 H(+) = H2O2 + O2. Its function is as follows. Destroys superoxide anion radicals which are normally produced within the cells and which are toxic to biological systems. Catalyzes the dismutation of superoxide anion radicals into O2 and H2O2 by successive reduction and oxidation of the transition metal ion at the active site. In Streptococcus oralis, this protein is Superoxide dismutase [Mn/Fe] (sodA).